The following is a 379-amino-acid chain: Alanine racemase (379 aa).

The active-site Proton acceptor; specific for D-alanine is K37. K37 bears the N6-(pyridoxal phosphate)lysine mark. R137 serves as a coordination point for substrate. Y269 acts as the Proton acceptor; specific for L-alanine in catalysis. Substrate is bound at residue M317.

Belongs to the alanine racemase family. Pyridoxal 5'-phosphate is required as a cofactor.

It carries out the reaction L-alanine = D-alanine. It functions in the pathway amino-acid biosynthesis; D-alanine biosynthesis; D-alanine from L-alanine: step 1/1. Catalyzes the interconversion of L-alanine and D-alanine. May also act on other amino acids. The polypeptide is Alanine racemase (alr) (Geobacter sp. (strain M21)).